The primary structure comprises 320 residues: Putative FBD-associated F-box protein At3g60710 (320 aa).

In terms of domain architecture, F-box spans 2 to 48; the sequence is EDLISQLPNELLQEILLNLPTSESVRTSVLPTRWRNLWQSVPGLYLI. Residues 212–268 form the FBD domain; that stretch reads MEEIASSPVPKCLQTSIENVKIKMTPKADQEKSRKAETEVANYILENATLLKLTLWL.

The protein is Putative FBD-associated F-box protein At3g60710 of Arabidopsis thaliana (Mouse-ear cress).